The following is a 307-amino-acid chain: Methionyl-tRNA formyltransferase (307 aa).

108 to 111 (SLLP) contacts (6S)-5,6,7,8-tetrahydrofolate.

It belongs to the Fmt family.

The enzyme catalyses L-methionyl-tRNA(fMet) + (6R)-10-formyltetrahydrofolate = N-formyl-L-methionyl-tRNA(fMet) + (6S)-5,6,7,8-tetrahydrofolate + H(+). Its function is as follows. Attaches a formyl group to the free amino group of methionyl-tRNA(fMet). The formyl group appears to play a dual role in the initiator identity of N-formylmethionyl-tRNA by promoting its recognition by IF2 and preventing the misappropriation of this tRNA by the elongation apparatus. This is Methionyl-tRNA formyltransferase from Stenotrophomonas maltophilia (strain K279a).